Consider the following 248-residue polypeptide: Ras-like protein family member 11B (248 aa).

Positions 29-246 (AGRRLVKIAV…ALSAKVRTVT (218 aa)) are small GTPase-like. GTP-binding positions include 40 to 47 (GASGVGKT), 87 to 91 (DTPGI), and 152 to 155 (NKAD). A disordered region spans residues 205–229 (QQPSGTPEKRRTSLIPRPKSPNMQD).

Belongs to the small GTPase superfamily. Ras family.

It carries out the reaction GTP + H2O = GDP + phosphate + H(+). The sequence is that of Ras-like protein family member 11B from Bos taurus (Bovine).